We begin with the raw amino-acid sequence, 225 residues long: ATP phosphoribosyltransferase (225 aa).

It belongs to the ATP phosphoribosyltransferase family. Short subfamily. Heteromultimer composed of HisG and HisZ subunits.

It localises to the cytoplasm. It catalyses the reaction 1-(5-phospho-beta-D-ribosyl)-ATP + diphosphate = 5-phospho-alpha-D-ribose 1-diphosphate + ATP. It functions in the pathway amino-acid biosynthesis; L-histidine biosynthesis; L-histidine from 5-phospho-alpha-D-ribose 1-diphosphate: step 1/9. Catalyzes the condensation of ATP and 5-phosphoribose 1-diphosphate to form N'-(5'-phosphoribosyl)-ATP (PR-ATP). Has a crucial role in the pathway because the rate of histidine biosynthesis seems to be controlled primarily by regulation of HisG enzymatic activity. In Herminiimonas arsenicoxydans, this protein is ATP phosphoribosyltransferase.